A 137-amino-acid polypeptide reads, in one-letter code: Peptide methionine sulfoxide reductase MsrB (137 aa).

In terms of domain architecture, MsrB spans 7-129 (AEELKKNLSE…NSASLRFTDG (123 aa)). 4 residues coordinate Zn(2+): Cys-46, Cys-49, Cys-95, and Cys-98. Cys-118 (nucleophile) is an active-site residue.

It belongs to the MsrB Met sulfoxide reductase family. It depends on Zn(2+) as a cofactor.

The catalysed reaction is L-methionyl-[protein] + [thioredoxin]-disulfide + H2O = L-methionyl-(R)-S-oxide-[protein] + [thioredoxin]-dithiol. This chain is Peptide methionine sulfoxide reductase MsrB, found in Escherichia coli (strain K12 / MC4100 / BW2952).